Consider the following 339-residue polypeptide: UDP-glucose 4-epimerase (339 aa).

Residues 12-13 (FI), 32-37 (DNLCNS), 59-60 (DI), 81-85 (FAGLK), N100, S125, Y150, K154, and F179 contribute to the NAD(+) site. Residues S125 and Y150 each coordinate substrate. The active-site Proton acceptor is the Y150. Residues N180, 200–201 (NL), 217–219 (SVF), R232, and 293–296 (RAGD) contribute to the substrate site.

The protein belongs to the NAD(P)-dependent epimerase/dehydratase family. In terms of assembly, homodimer. NAD(+) serves as cofactor.

The enzyme catalyses UDP-alpha-D-glucose = UDP-alpha-D-galactose. The protein operates within carbohydrate metabolism; galactose metabolism. In terms of biological role, involved in the metabolism of galactose. Plays an essential role in the incorporation of galactose into meningococcal lipopolysaccharide surface molecules, which are important for pathogenesis. Catalyzes the conversion of UDP-galactose (UDP-Gal) to UDP-glucose (UDP-Glc) through a mechanism involving the transient reduction of NAD. The protein is UDP-glucose 4-epimerase (galE) of Neisseria meningitidis serogroup A / serotype 4A (strain DSM 15465 / Z2491).